A 248-amino-acid polypeptide reads, in one-letter code: Pyridoxine 5'-phosphate synthase (248 aa).

N7 lines the 3-amino-2-oxopropyl phosphate pocket. 9–10 (DH) contributes to the 1-deoxy-D-xylulose 5-phosphate binding site. A 3-amino-2-oxopropyl phosphate-binding site is contributed by R18. Residue H52 is the Proton acceptor of the active site. Positions 54 and 59 each coordinate 1-deoxy-D-xylulose 5-phosphate. Residue E79 is the Proton acceptor of the active site. T109 is a 1-deoxy-D-xylulose 5-phosphate binding site. Residue H201 is the Proton donor of the active site. 3-amino-2-oxopropyl phosphate contacts are provided by residues G202 and 223-224 (GH).

The protein belongs to the PNP synthase family. Homooctamer; tetramer of dimers.

It is found in the cytoplasm. The catalysed reaction is 3-amino-2-oxopropyl phosphate + 1-deoxy-D-xylulose 5-phosphate = pyridoxine 5'-phosphate + phosphate + 2 H2O + H(+). It participates in cofactor biosynthesis; pyridoxine 5'-phosphate biosynthesis; pyridoxine 5'-phosphate from D-erythrose 4-phosphate: step 5/5. In terms of biological role, catalyzes the complicated ring closure reaction between the two acyclic compounds 1-deoxy-D-xylulose-5-phosphate (DXP) and 3-amino-2-oxopropyl phosphate (1-amino-acetone-3-phosphate or AAP) to form pyridoxine 5'-phosphate (PNP) and inorganic phosphate. The sequence is that of Pyridoxine 5'-phosphate synthase from Opitutus terrae (strain DSM 11246 / JCM 15787 / PB90-1).